Consider the following 367-residue polypeptide: Glutamate 5-kinase (367 aa).

An ATP-binding site is contributed by Lys-10. Residues Ser-50, Asp-137, and Asn-149 each coordinate substrate. Residues 169–170 and 211–217 contribute to the ATP site; these read TD and TGGMGTK. A PUA domain is found at 275-353; the sequence is AGEITVDEGA…QQIDAILGYE (79 aa).

The protein belongs to the glutamate 5-kinase family.

The protein resides in the cytoplasm. It catalyses the reaction L-glutamate + ATP = L-glutamyl 5-phosphate + ADP. The protein operates within amino-acid biosynthesis; L-proline biosynthesis; L-glutamate 5-semialdehyde from L-glutamate: step 1/2. Catalyzes the transfer of a phosphate group to glutamate to form L-glutamate 5-phosphate. The protein is Glutamate 5-kinase of Enterobacter sp. (strain 638).